A 368-amino-acid chain; its full sequence is mRNA export factor (368 aa).

A disordered region spans residues 15 to 34 (TSMFGSATTDNHNPMKDIEV). WD repeat units follow at residues 37–79 (SPDD…QTIP), 84–114 (MHTG…KMWD), 125–157 (QHDA…KFWD), 168–206 (QLPE…EFRR), 215–255 (HRCV…KDNF), 271–301 (QDIY…SFWD), and 310–346 (TSEQ…EFYN). Thr-229 is modified (phosphothreonine).

It belongs to the WD repeat rae1 family. As to quaternary structure, interacts with NUMA1 (via N-terminal end of the coiled-coil domain); this interaction promotes spindle formation in mitosis. Interacts with NUP98. Interacts with MYCBP2. Interacts with USP11.

Its subcellular location is the cytoplasm. It localises to the nucleus. The protein resides in the cytoskeleton. It is found in the spindle pole. In terms of biological role, plays a role in mitotic bipolar spindle formation. Binds mRNA. May function in nucleocytoplasmic transport and in directly or indirectly attaching cytoplasmic mRNPs to the cytoskeleton. The chain is mRNA export factor (RAE1) from Macaca fascicularis (Crab-eating macaque).